We begin with the raw amino-acid sequence, 110 residues long: Protein mistic (110 aa).

The Cytoplasmic portion of the chain corresponds to 1–7; that stretch reads MFCTFFE. The chain crosses the membrane as a helical span at residues 8-22; the sequence is KHHRKWDILLEKSTG. Topologically, residues 23–31 are extracellular; that stretch reads VMEAMKVTS. Residues 32 to 55 traverse the membrane as a helical segment; sequence EEKEQLSTAIDRMNEGLDAFIQLY. Residues 56-66 are Cytoplasmic-facing; it reads NESEIDEPLIQ. The chain crosses the membrane as a helical span at residues 67–81; sequence LDDDTAELMKQARDM. At 82 to 88 the chain is on the extracellular side; it reads YGQEKLN. The chain crosses the membrane as a helical span at residues 89–102; it reads EKLNTIIKQILSIS. Over 103–110 the chain is Cytoplasmic; the sequence is VSEEGEKE.

In terms of assembly, monomer.

It is found in the cell membrane. Functionally, chaperone that facilitates the production and integration of integral membrane proteins into the bacterial lipid bilayer. This Bacillus subtilis (strain 168) protein is Protein mistic (mstX).